We begin with the raw amino-acid sequence, 89 residues long: Large ribosomal subunit protein bL27 (89 aa).

A disordered region spans residues 1–20 (MAHKKAGGSSRNGRDSAGQR).

It belongs to the bacterial ribosomal protein bL27 family.

The chain is Large ribosomal subunit protein bL27 from Paramagnetospirillum magneticum (strain ATCC 700264 / AMB-1) (Magnetospirillum magneticum).